The chain runs to 257 residues: 3-deoxy-manno-octulosonate cytidylyltransferase (257 aa).

The protein belongs to the KdsB family.

The protein localises to the cytoplasm. The enzyme catalyses 3-deoxy-alpha-D-manno-oct-2-ulosonate + CTP = CMP-3-deoxy-beta-D-manno-octulosonate + diphosphate. It functions in the pathway nucleotide-sugar biosynthesis; CMP-3-deoxy-D-manno-octulosonate biosynthesis; CMP-3-deoxy-D-manno-octulosonate from 3-deoxy-D-manno-octulosonate and CTP: step 1/1. It participates in bacterial outer membrane biogenesis; lipopolysaccharide biosynthesis. Functionally, activates KDO (a required 8-carbon sugar) for incorporation into bacterial lipopolysaccharide in Gram-negative bacteria. In Xylella fastidiosa (strain M12), this protein is 3-deoxy-manno-octulosonate cytidylyltransferase.